We begin with the raw amino-acid sequence, 1483 residues long: Cystic fibrosis transmembrane conductance regulator (1483 aa).

The Cytoplasmic segment spans residues 1-77 (MQRSPLEKAS…KLINALRRCF (77 aa)). Residues 78–98 (FWKFMFYGILLYLGEVTKAVQ) form a helical membrane-spanning segment. The region spanning 81-365 (FMFYGILLYL…WAVQTWYDSL (285 aa)) is the ABC transmembrane type-1 1 domain. At 99–122 (PLLLGRIIASYDPDNKVERSIAIY) the chain is on the extracellular side. Residues 123-146 (LGIGLCLLFVVRTLLLHPAIFGLH) traverse the membrane as a helical segment. The Cytoplasmic portion of the chain corresponds to 147–195 (HIGMQMRIAMFSLIYKKTLKLSSRVLDKISIGQLISLLSNNLNKFDEGL). A helical transmembrane segment spans residues 196 to 216 (ALAHFVWIVPLQVTLLMGLLW). Over 217–222 (ELLQAS) the chain is Extracellular. A helical transmembrane segment spans residues 223-243 (AFCGLAFLIIVAFYQAGLGRM). The Cytoplasmic segment spans residues 244–298 (MMKYRDKRGGKINERLVITSEMIENIQSVKAYCWEEAMEKMIENLRQTELKLTRK). The chain crosses the membrane as a helical span at residues 299 to 319 (AAYVRYCNSSAFFFSGFFVVF). Residues 320-339 (LSVLPYALMKGIILRKIFTT) lie on the Extracellular side of the membrane. The chain crosses the membrane as a helical span at residues 340–358 (ISFCIVLRMAVTRQFPWAV). Residues 359 to 859 (QTWYDSLGAI…YLRYITIHKS (501 aa)) are Cytoplasmic-facing. ATP is bound by residues tryptophan 401, serine 434, 458–465 (GSTGAGKT), and glutamine 493. Residues 423 to 646 (NGDNSLFFSN…RPDFSSKLMG (224 aa)) form the ABC transporter 1 domain. A lipid anchor (S-palmitoyl cysteine) is attached at cysteine 524. Serine 549 and serine 660 each carry phosphoserine. The interval 654–832 (SAERRNSILT…EEINEEDLKE (179 aa)) is disordered R region. Residue serine 670 is modified to Phosphoserine; by PKA. Serine 686 is modified (phosphoserine). A Glycyl lysine isopeptide (Lys-Gly) (interchain with G-Cter in ubiquitin) cross-link involves residue lysine 688. A phosphoserine mark is found at serine 700 and serine 712. Threonine 717 carries the post-translational modification Phosphothreonine. Phosphoserine is present on residues serine 737, serine 768, serine 791, serine 796, and serine 814. Residues 860–880 (LIFVLIWCLIIFLAEVAVSLV) traverse the membrane as a helical segment. The ABC transmembrane type-1 2 domain maps to 860-1157 (LIFVLIWCLI…AVNSSIDVDS (298 aa)). At 881-920 (FLLLFEKSPRQDTGNVTKSSNNSSYGVIITNTSSYYIIYI) the chain is on the extracellular side. Residues asparagine 895, asparagine 901, asparagine 902, and asparagine 911 are each glycosylated (N-linked (GlcNAc...) asparagine). The chain crosses the membrane as a discontinuously helical span at residues 921–941 (YVGVADTLLALGLLRGLPLVH). The Cytoplasmic portion of the chain corresponds to 942–992 (TLITASKILHHKMLHSVLQAPMSTLNTLKAGGILNRFSKDIAILDDLLPLT). The helical transmembrane segment at 993–1013 (IFDFIQLILIVIGAVIVVSVL) threads the bilayer. At 1014-1015 (EP) the chain is on the extracellular side. A helical transmembrane segment spans residues 1016 to 1036 (YIFLATVPVIIAFVMLRAYFL). Over 1037 to 1097 (HTSQQLKQLE…TANWFLYLST (61 aa)) the chain is Cytoplasmic. Residues 1098–1118 (LRWFQMRIEMIFVIFFIAVTF) form a helical membrane-spanning segment. The Extracellular segment spans residues 1119–1132 (ISILTTGDGEGRVG). The helical transmembrane segment at 1133-1153 (IILTLAMNIMNTLQWAVNSSI) threads the bilayer. Residues 1154-1483 (DVDSLMRSVS…TEEEVQETRL (330 aa)) are Cytoplasmic-facing. The ABC transporter 2 domain maps to 1213-1446 (MTVKDLTAKY…KSLFRQAISN (234 aa)). ATP contacts are provided by residues tyrosine 1222 and 1247-1254 (GRTGSGKS). Residues 1389-1483 (RTIKQAFADC…TEEEVQETRL (95 aa)) are interaction with GORASP2. Residue cysteine 1398 is the site of S-palmitoyl cysteine attachment. 2 positions are modified to phosphoserine: serine 1447 and serine 1459. The span at 1455 to 1465 (HRNSSKHKSRS) shows a compositional bias: basic residues. Residues 1455–1483 (HRNSSKHKSRSKIAALKEETEEEVQETRL) are disordered. The segment covering 1473–1483 (ETEEEVQETRL) has biased composition (acidic residues). A PDZ-binding motif is present at residues 1481-1483 (TRL).

It belongs to the ABC transporter superfamily. ABCC family. CFTR transporter (TC 3.A.1.202) subfamily. In terms of assembly, monomer; does not require oligomerization for channel activity. May form oligomers in the membrane. Interacts with SLC26A3, SLC26A6 and NHERF1. Interacts with SHANK2. Interacts with MYO6. Interacts (via C-terminus) with GOPC (via PDZ domain); this promotes CFTR internalization and thereby decreases channel activity. Interacts with SLC4A7 through NHERF1. Found in a complex with MYO5B and RAB11A. Interacts with ANO1. Interacts with SLC26A8. Interacts with AHCYL1; the interaction increases CFTR activity. Interacts with CSE1L. The core-glycosylated form interacts with GORASP2 (via PDZ GRASP-type 1 domain) in respone to ER stress. Interacts with MARCHF2; the interaction leads to CFTR ubiqtuitination and degradation. Interacts with ADGRG2. Post-translationally, N-glycosylated. In terms of processing, phosphorylated; cAMP treatment promotes phosphorylation and activates the channel. Dephosphorylation decreases the ATPase activity (in vitro). Phosphorylation at PKA sites activates the channel. Phosphorylation at PKC sites enhances the response to phosphorylation by PKA. Phosphorylated by AMPK; this inhibits channel activity. Ubiquitinated, leading to its degradation in the lysosome. Deubiquitination by USP10 in early endosomes enhances its endocytic recycling to the cell membrane. Ubiquitinated by RNF185 during ER stress. Ubiquitinated by MARCHF2.

The protein localises to the apical cell membrane. The protein resides in the early endosome membrane. It is found in the cell membrane. Its subcellular location is the recycling endosome membrane. It localises to the endoplasmic reticulum membrane. The protein localises to the nucleus. The catalysed reaction is ATP + H2O + closed Cl(-) channel = ADP + phosphate + open Cl(-) channel.. The enzyme catalyses chloride(in) = chloride(out). It catalyses the reaction hydrogencarbonate(in) = hydrogencarbonate(out). It carries out the reaction ATP + H2O = ADP + phosphate + H(+). Functionally, epithelial ion channel that plays an important role in the regulation of epithelial ion and water transport and fluid homeostasis. Mediates the transport of chloride ions across the cell membrane. The ion channel is also permeable to HCO(3)(-); selectivity depends on the extracellular chloride concentration. Exerts its function also by modulating the activity of other ion channels and transporters. Contributes to the regulation of the pH and the ion content of the epithelial fluid layer. Modulates the activity of the epithelial sodium channel (ENaC) complex, in part by regulating the cell surface expression of the ENaC complex. May regulate bicarbonate secretion and salvage in epithelial cells by regulating the transporter SLC4A7. Can inhibit the chloride channel activity of ANO1. Plays a role in the chloride and bicarbonate homeostasis during sperm epididymal maturation and capacitation. The polypeptide is Cystic fibrosis transmembrane conductance regulator (Atelerix albiventris (Middle-African hedgehog)).